Here is a 139-residue protein sequence, read N- to C-terminus: uncharacterized protein (139 aa).

A disordered region spans residues 1-116; that stretch reads MYNPWQVGAS…TRPRVVARGK (116 aa). Composition is skewed to low complexity over residues 50–70 and 84–110; these read RPRPFSSSPRSASGRLRGPRP and LPAYLPPAAALDSQTSAPTVSPVTRPR.

This is an uncharacterized protein from Homo sapiens (Human).